Here is a 502-residue protein sequence, read N- to C-terminus: MKIAVIGAGVTGLAAAARIASQGHEVTIFEKNNNVGGRMNQLKKDGFTFDMGPTIVMMPDVYKDVFTACGKNYEDYIELRQLRYIYDVYFDHDDRITVPTDLAELQQMLESIEPGSTHGFMSFLTDVYKKYEIARRYFLERTYRKPSDFYNMTSLVQGAKLKTLNHADQLIEHYIDNEKIQKLLAFQTLYIGIDPKRGPSLYSIIPMIEMMFGVHFIKGGMYGMAQGLAQLNKDLGVNIELNAEIEQIIIDPKFKRADAIKVNGDIRKFDKILCTADFPSVAESLMPDFAPIKKYPPHKIADLDYSCSAFLMYIGIDIDVTDQVRLHNVIFSDDFRGNIEEIFEGRLSYDPSIYVYVPAVADKSLAPEGKTGIYVLMPTPELKTGSGIDWSDEALTQQIKEIIYRKLATIEVFEDIKSHIVSETIFTPNDFEQTYHAKFGSAFGLMPTLAQSNYYRPQNVSRDYKDLYFAGASTHPGAGVPIVLTSAKITVDEMIKDIEQGV.

5–17 (VIGAGVTGLAAAA) contacts FAD.

It belongs to the carotenoid/retinoid oxidoreductase family. CrtN subfamily.

The catalysed reaction is 15-cis-4,4'-diapophytoene + 3 FAD + 3 H(+) = all-trans-4,4'-diaponeurosporene + 3 FADH2. It participates in carotenoid biosynthesis; staphyloxanthin biosynthesis; staphyloxanthin from farnesyl diphosphate: step 2/5. In terms of biological role, involved in the biosynthesis of the yellow-orange carotenoid staphyloxanthin, which plays a role in the virulence via its protective function against oxidative stress. Catalyzes three successive dehydrogenation reactions that lead to the introduction of three double bonds into 4,4'-diapophytoene (dehydrosqualene), with 4,4'-diapophytofluene and 4,4'-diapo-zeta-carotene as intermediates, and 4,4'-diaponeurosporene (the major deep-yellow pigment in staphylococci strains) as the end product. This Staphylococcus aureus (strain MW2) protein is 4,4'-diapophytoene desaturase (4,4'-diaponeurosporene-forming).